We begin with the raw amino-acid sequence, 391 residues long: Arrestin-C (391 aa).

The segment covering Ala-369–Ser-379 has biased composition (basic and acidic residues). The disordered stretch occupies residues Ala-369–Ser-391.

It belongs to the arrestin family. Homodimer; disulfide-linked in response to retinal illumination. Interacts with CXCR4; the interaction is dependent on the C-terminal phosphorylation of CXCR4 and modulates the calcium ion mobilization activity of CXCR4. Interacts with GPR84.

Its subcellular location is the photoreceptor inner segment. It localises to the cell projection. The protein resides in the cilium. The protein localises to the photoreceptor outer segment. In terms of biological role, may play a role in an as yet undefined retina-specific signal transduction. Could bind to photoactivated-phosphorylated red/green opsins. The protein is Arrestin-C (ARR3) of Sus scrofa (Pig).